The following is a 274-amino-acid chain: 3-methyl-2-oxobutanoate hydroxymethyltransferase (274 aa).

Mg(2+) contacts are provided by aspartate 49 and aspartate 88. Residues aspartate 49–serine 50, aspartate 88, and lysine 118 each bind 3-methyl-2-oxobutanoate. Glutamate 120 provides a ligand contact to Mg(2+). The active-site Proton acceptor is glutamate 187.

Belongs to the PanB family. In terms of assembly, homodecamer; pentamer of dimers. It depends on Mg(2+) as a cofactor.

Its subcellular location is the cytoplasm. The catalysed reaction is 3-methyl-2-oxobutanoate + (6R)-5,10-methylene-5,6,7,8-tetrahydrofolate + H2O = 2-dehydropantoate + (6S)-5,6,7,8-tetrahydrofolate. It functions in the pathway cofactor biosynthesis; (R)-pantothenate biosynthesis; (R)-pantoate from 3-methyl-2-oxobutanoate: step 1/2. In terms of biological role, catalyzes the reversible reaction in which hydroxymethyl group from 5,10-methylenetetrahydrofolate is transferred onto alpha-ketoisovalerate to form ketopantoate. The sequence is that of 3-methyl-2-oxobutanoate hydroxymethyltransferase from Nitrobacter winogradskyi (strain ATCC 25391 / DSM 10237 / CIP 104748 / NCIMB 11846 / Nb-255).